The following is a 989-amino-acid chain: E3 ubiquitin-protein ligase Arkadia (989 aa).

Residues lysine 19, lysine 33, lysine 46, lysine 58, lysine 72, lysine 86, lysine 95, and lysine 109 each participate in a glycyl lysine isopeptide (Lys-Gly) (interchain with G-Cter in SUMO2) cross-link. Residues 63–195 (FSHLCDDSQK…TEADPVPSLL (133 aa)) form a disordered region. The segment covering 65–88 (HLCDDSQKQEKDMTGNQQEQEKSG) has biased composition (basic and acidic residues). A compositionally biased stretch (polar residues) spans 97-109 (QQAGPSYVQNCVK). Residues 110–120 (ENQEILGRRQQ) are compositionally biased toward basic and acidic residues. Low complexity predominate over residues 131–144 (SSLSECLSSPSSSL). Lysine 172 participates in a covalent cross-link: Glycyl lysine isopeptide (Lys-Gly) (interchain with G-Cter in SUMO2). Positions 173–183 (SRSHSARSHKW) are enriched in basic residues. Glycyl lysine isopeptide (Lys-Gly) (interchain with G-Cter in SUMO2) cross-links involve residues lysine 197 and lysine 217. Positions 213–293 (KRLVKSSSSQ…PSNPAAPSGS (81 aa)) are disordered. The interval 240–402 (ALAQRKYALL…VPTTSARMDS (163 aa)) is interaction with AXIN1. Composition is skewed to low complexity over residues 248–270 (LLSS…SSST) and 278–291 (ASAS…AAPS). The SUMO interaction motif 1 (SIM) motif lies at 298 to 302 (VVVIE). Positions 323–329 (EVEIVTV) match the SUMO interaction motif 2 (SIM) motif. Residues 335–367 (SRSTLGHSRSHWSQGSSSHTGRPQESRNRSRIS) form a disordered region. A compositionally biased stretch (low complexity) spans 345–355 (HWSQGSSSHTG). Positions 380–384 (VVDLT) match the SUMO interaction motif 3 (SIM) motif. Disordered stretches follow at residues 388-475 (DEPT…MPRL), 506-559 (HGHH…YHDQ), and 641-675 (MPPP…PPPQ). Over residues 393 to 451 (VPTTSARMDSQTTSASINNSNPSTSEQASDTTSTVASSQPSTVSETEATLTSNSATGSS) the composition is skewed to polar residues. Residues 506 to 520 (HGHHFQHHHHHHHTP) are compositionally biased toward basic residues. Residues 548-558 (ANSSSGSSYHD) are compositionally biased toward polar residues. The interval 902–904 (YPH) is ubiquitin binding. Residues lysine 918 and lysine 922 each participate in a glycyl lysine isopeptide (Lys-Gly) (interchain with G-Cter in SUMO2) cross-link. Positions 937 and 940 each coordinate Zn(2+). The RING-type; atypical zinc-finger motif lies at 937–978 (CTICLSILEEGEDVRRLPCMHLFHQVCVDQWLITNKKCPICR). Residues 952–956 (RLPCM) form a ubiquitin binding region. Zn(2+)-binding residues include histidine 960 and cysteine 963.

Belongs to the Arkadia family. Monomer. Interacts with SMAD6, SMAD7, AXIN1, AXIN2 and SKIL isoform SNON. Interacts with (phosphorylated) SMAD2 and SMAD3. Part of a complex containing RNF111, AXIN1 and SMAD7. Interacts (via SIM domains) with SUMO1 and SUMO2. As to expression, ubiquitously expressed.

The protein localises to the nucleus. Its subcellular location is the cytoplasm. It is found in the PML body. It catalyses the reaction S-ubiquitinyl-[E2 ubiquitin-conjugating enzyme]-L-cysteine + [acceptor protein]-L-lysine = [E2 ubiquitin-conjugating enzyme]-L-cysteine + N(6)-ubiquitinyl-[acceptor protein]-L-lysine.. The protein operates within protein modification; protein ubiquitination. Its activity is regulated as follows. Binds free ubiquitin non-covalently via its RING-type zinc finger. Ubiquitin-binding leads to enhance the E3 ubiquitin-protein ligase activity by stabilizing the ubiquitin-conjugating enzyme E2 (donor ubiquitin) in the 'closed' conformation and activating ubiquitin transfer. In terms of biological role, E3 ubiquitin-protein ligase required for mesoderm patterning during embryonic development. Acts as an enhancer of the transcriptional responses of the SMAD2/SMAD3 effectors, which are activated downstream of BMP. Acts by mediating ubiquitination and degradation of SMAD inhibitors such as SMAD7, inducing their proteasomal degradation and thereby enhancing the transcriptional activity of TGF-beta and BMP. In addition to enhance transcription of SMAD2/SMAD3 effectors, also regulates their turnover by mediating their ubiquitination and subsequent degradation, coupling their activation with degradation, thereby ensuring that only effectors 'in use' are degraded. Activates SMAD3/SMAD4-dependent transcription by triggering signal-induced degradation of SNON isoform of SKIL. Associates with UBE2D2 as an E2 enzyme. Specifically binds polysumoylated chains via SUMO interaction motifs (SIMs) and mediates ubiquitination of sumoylated substrates. Catalyzes 'Lys-63'-linked ubiquitination of sumoylated XPC in response to UV irradiation, promoting nucleotide excision repair. Mediates ubiquitination and degradation of sumoylated PML. The regulation of the BMP-SMAD signaling is however independent of sumoylation and is not dependent of SUMO interaction motifs (SIMs). The chain is E3 ubiquitin-protein ligase Arkadia from Mus musculus (Mouse).